We begin with the raw amino-acid sequence, 188 residues long: Single-stranded DNA-binding protein DdrB (188 aa).

Residues 140-188 (YAVPGGAAGNGQGRPAPQGQPAQARPQATAARPAARPPVQPGQEEETPF) form a disordered region. Low complexity predominate over residues 152-173 (GRPAPQGQPAQARPQATAARPA).

As to quaternary structure, homopentamer arranged in a ring-structure; DNA binds between subunits and along the top of the ring. The pentamers self-associate to coat ssDNA in higher-ordered structures; oligomerization facilitates the assembly of extended nucleoprotein complexes. Self-assembly does not however require ssDNA-binding. Interacts with SSB.

Its function is as follows. ssDNA-binding protein that contributes to the ionizing radiation resistance of D.radiodurans. Plays a role in DNA repair and genome reconstitution in a RecA-independent process. Required for recovery from severe genomic fragmentation as a result of exposure to severe levels of ionizing radiation. Binds ssDNA but not dsDNA. Stimulates annealing of complementary ssDNA. Does not complement an ssb disruption. The chain is Single-stranded DNA-binding protein DdrB (ddrB) from Deinococcus radiodurans (strain ATCC 13939 / DSM 20539 / JCM 16871 / CCUG 27074 / LMG 4051 / NBRC 15346 / NCIMB 9279 / VKM B-1422 / R1).